A 69-amino-acid polypeptide reads, in one-letter code: Parvalbumin beta 3 (69 aa).

Ala-1 carries the N-acetylalanine modification. The EF-hand domain maps to 24 to 59; that stretch reads FNYKTFFKFFAIIDQDHSGFIEEEELKLFLQTFSAG. Ca(2+)-binding residues include Asp-37, Asp-39, Ser-41, Phe-43, Glu-45, and Glu-48.

It belongs to the parvalbumin family.

Functionally, in muscle, parvalbumin is thought to be involved in relaxation after contraction. It binds two calcium ions. The sequence is that of Parvalbumin beta 3 from Merluccius polli (Benguela hake).